The primary structure comprises 785 residues: Endonuclease MutS2 (785 aa).

ATP is bound at residue 334-341 (GPNTGGKT). One can recognise a Smr domain in the interval 710–785 (LDLRGKRYEE…GNGATIVHFK (76 aa)).

It belongs to the DNA mismatch repair MutS family. MutS2 subfamily. Homodimer. Binds to stalled ribosomes, contacting rRNA.

Its function is as follows. Endonuclease that is involved in the suppression of homologous recombination and thus may have a key role in the control of bacterial genetic diversity. In terms of biological role, acts as a ribosome collision sensor, splitting the ribosome into its 2 subunits. Detects stalled/collided 70S ribosomes which it binds and splits by an ATP-hydrolysis driven conformational change. Acts upstream of the ribosome quality control system (RQC), a ribosome-associated complex that mediates the extraction of incompletely synthesized nascent chains from stalled ribosomes and their subsequent degradation. Probably generates substrates for RQC. This Pediococcus pentosaceus (strain ATCC 25745 / CCUG 21536 / LMG 10740 / 183-1w) protein is Endonuclease MutS2.